The primary structure comprises 456 residues: Bifunctional protein GlmU (456 aa).

Positions 1-227 (MKLRVVILAA…AQEVEGANNR (227 aa)) are pyrophosphorylase. UDP-N-acetyl-alpha-D-glucosamine contacts are provided by residues 8-11 (LAAG), K22, Q73, 78-79 (GT), 100-102 (YGD), G137, E152, N167, and N225. Mg(2+) is bound at residue D102. N225 is a binding site for Mg(2+). The linker stretch occupies residues 228-248 (QQLASLERALQQRQAEELMTQ). Positions 249 to 456 (GVTLIDPARF…WQRPQSKKGT (208 aa)) are N-acetyltransferase. R331 and K349 together coordinate UDP-N-acetyl-alpha-D-glucosamine. The active-site Proton acceptor is the H361. UDP-N-acetyl-alpha-D-glucosamine contacts are provided by Y364 and N375. Acetyl-CoA is bound by residues A378, 384–385 (NY), S403, A421, and R438.

This sequence in the N-terminal section; belongs to the N-acetylglucosamine-1-phosphate uridyltransferase family. The protein in the C-terminal section; belongs to the transferase hexapeptide repeat family. As to quaternary structure, homotrimer. The cofactor is Mg(2+).

The protein localises to the cytoplasm. The enzyme catalyses alpha-D-glucosamine 1-phosphate + acetyl-CoA = N-acetyl-alpha-D-glucosamine 1-phosphate + CoA + H(+). It carries out the reaction N-acetyl-alpha-D-glucosamine 1-phosphate + UTP + H(+) = UDP-N-acetyl-alpha-D-glucosamine + diphosphate. It participates in nucleotide-sugar biosynthesis; UDP-N-acetyl-alpha-D-glucosamine biosynthesis; N-acetyl-alpha-D-glucosamine 1-phosphate from alpha-D-glucosamine 6-phosphate (route II): step 2/2. It functions in the pathway nucleotide-sugar biosynthesis; UDP-N-acetyl-alpha-D-glucosamine biosynthesis; UDP-N-acetyl-alpha-D-glucosamine from N-acetyl-alpha-D-glucosamine 1-phosphate: step 1/1. The protein operates within bacterial outer membrane biogenesis; LPS lipid A biosynthesis. Catalyzes the last two sequential reactions in the de novo biosynthetic pathway for UDP-N-acetylglucosamine (UDP-GlcNAc). The C-terminal domain catalyzes the transfer of acetyl group from acetyl coenzyme A to glucosamine-1-phosphate (GlcN-1-P) to produce N-acetylglucosamine-1-phosphate (GlcNAc-1-P), which is converted into UDP-GlcNAc by the transfer of uridine 5-monophosphate (from uridine 5-triphosphate), a reaction catalyzed by the N-terminal domain. The polypeptide is Bifunctional protein GlmU (Idiomarina loihiensis (strain ATCC BAA-735 / DSM 15497 / L2-TR)).